The chain runs to 154 residues: Superoxide dismutase [Cu-Zn] (154 aa).

Lys-19 participates in a covalent cross-link: Glycyl lysine isopeptide (Lys-Gly) (interchain with G-Cter in SUMO). A phosphoserine mark is found at Ser-26 and Ser-39. Glu-43 lines the Zn(2+) pocket. Cu cation contacts are provided by His-47, His-49, and His-64. Cys-58 and Cys-147 are joined by a disulfide. Residue His-64 participates in Zn(2+) binding. Residue Lys-70 forms a Glycyl lysine isopeptide (Lys-Gly) (interchain with G-Cter in SUMO) linkage. Positions 72, 81, and 84 each coordinate Zn(2+). Residues Ser-99 and Ser-117 each carry the phosphoserine modification. His-121 contacts Cu cation. Phosphothreonine occurs at positions 132 and 138. Arg-144 provides a ligand contact to substrate.

The protein belongs to the Cu-Zn superoxide dismutase family. In terms of assembly, homodimer in holo form. In apo form, heterodimer with CCS1. Zinc-binding at 'His-16' of CCS1 and Glu-43 of apo-SOD1 is required for this heterodimerization. Cu cation is required as a cofactor. Requires Zn(2+) as cofactor.

It is found in the cytoplasm. Its subcellular location is the mitochondrion intermembrane space. It carries out the reaction 2 superoxide + 2 H(+) = H2O2 + O2. Destroys radicals which are normally produced within the cells and which are toxic to biological systems. The polypeptide is Superoxide dismutase [Cu-Zn] (Saccharomyces cerevisiae (strain ATCC 204508 / S288c) (Baker's yeast)).